Here is a 153-residue protein sequence, read N- to C-terminus: Pheromone-binding protein Gp-9 (153 aa).

The N-terminal stretch at 1–19 (MKTFVLHIFIFALVAFASA) is a signal peptide. 3 disulfides stabilise this stretch: cysteine 37/cysteine 77, cysteine 73/cysteine 129, and cysteine 118/cysteine 138.

It belongs to the PBP/GOBP family. In terms of assembly, homodimer.

The protein resides in the secreted. Colony queen number, a major feature of social organization, is associated with worker genotype for Gp-9. Colonies are headed by either a single reproductive queen (monogyne form) or multiple queens (polygyne form). Differences in worker Gp-9 genotypes between social forms may cause differences in workers' abilities to recognize queens and regulate their numbers. This chain is Pheromone-binding protein Gp-9, found in Solenopsis sp. (strain B0-153) (Fire ant).